The chain runs to 146 residues: Hemoglobin subunit beta (146 aa).

At Val-1 the chain carries N-acetylvaline. Residues 2–146 form the Globin domain; it reads HLTAEEKSAV…VANALAHKYH (145 aa). Residue Thr-12 is modified to Phosphothreonine. Lys-59 carries the N6-acetyllysine modification. His-63 lines the heme b pocket. The residue at position 82 (Lys-82) is an N6-acetyllysine. His-92 is a heme b binding site. Cys-93 is modified (S-nitrosocysteine). Lys-144 bears the N6-acetyllysine mark.

The protein belongs to the globin family. As to quaternary structure, heterotetramer of two alpha chains and two beta chains. As to expression, red blood cells.

Functionally, involved in oxygen transport from the lung to the various peripheral tissues. In Balaenoptera acutorostrata (Common minke whale), this protein is Hemoglobin subunit beta (HBB).